We begin with the raw amino-acid sequence, 65 residues long: MPKMKTNRAAAKRFKVTGSGRIRRSKGGLNHCMQEKSKKRLRRLRKNDMVDSAMEKRVKLLLPYG.

It belongs to the bacterial ribosomal protein bL35 family.

The sequence is that of Large ribosomal subunit protein bL35 from Sorangium cellulosum (strain So ce56) (Polyangium cellulosum (strain So ce56)).